We begin with the raw amino-acid sequence, 153 residues long: Ribosome maturation factor RimP (153 aa).

This sequence belongs to the RimP family.

It localises to the cytoplasm. Its function is as follows. Required for maturation of 30S ribosomal subunits. This is Ribosome maturation factor RimP from Coxiella burnetii (strain RSA 331 / Henzerling II).